The following is a 383-amino-acid chain: 8-amino-7-oxononanoate synthase (383 aa).

Arginine 21 lines the substrate pocket. 108-109 contributes to the pyridoxal 5'-phosphate binding site; that stretch reads GY. Histidine 133 is a binding site for substrate. Pyridoxal 5'-phosphate is bound by residues serine 179, histidine 207, and threonine 233. Lysine 236 is modified (N6-(pyridoxal phosphate)lysine). Threonine 350 contacts substrate.

Belongs to the class-II pyridoxal-phosphate-dependent aminotransferase family. BioF subfamily. In terms of assembly, homodimer. Requires pyridoxal 5'-phosphate as cofactor.

It carries out the reaction 6-carboxyhexanoyl-[ACP] + L-alanine + H(+) = (8S)-8-amino-7-oxononanoate + holo-[ACP] + CO2. The protein operates within cofactor biosynthesis; biotin biosynthesis. Functionally, catalyzes the decarboxylative condensation of pimeloyl-[acyl-carrier protein] and L-alanine to produce 8-amino-7-oxononanoate (AON), [acyl-carrier protein], and carbon dioxide. This chain is 8-amino-7-oxononanoate synthase, found in Serratia proteamaculans (strain 568).